The following is a 1852-amino-acid chain: Dihydropyridine-sensitive L-type skeletal muscle calcium channel subunit alpha-1 (1852 aa).

The Cytoplasmic portion of the chain corresponds to 1-70; it reads MESGSGGGGG…KTCINIVEWK (70 aa). One copy of the I repeat lies at 57–354; it reads NPFRKTCINI…LVLGALSGEF (298 aa). A helical membrane pass occupies residues 71–86; sequence PFEIIILLTIFANCVA. At 87–107 the chain is on the extracellular side; sequence LAVFLPMPEEDTNNTNLTLES. N-linked (GlcNAc...) asparagine glycosylation is found at N99 and N102. Residues 108–127 traverse the membrane as a helical segment; sequence LEYIFLVIFTLECFLKIVAY. The Cytoplasmic segment spans residues 128–139; the sequence is GLLFHEGAYLRN. A helical membrane pass occupies residues 140-155; it reads CWNILDFVIVFMGLFT. Over 156–176 the chain is Extracellular; that stretch reads LVVDTINTIAGVPTEKGGGFD. Residues 177-195 traverse the membrane as a helical segment; that stretch reads MKALRAFRVLRPLRLVSGV. At 196 to 214 the chain is on the cytoplasmic side; it reads PSLQVVMSSILKSMLPLFH. The helical transmembrane segment at 215–234 threads the bilayer; that stretch reads IALLVFFMVHIYAIMGLELF. At 235-326 the chain is on the extracellular side; it reads KCKMHKTCYY…WINDAMGNDW (92 aa). A glycan (N-linked (GlcNAc...) asparagine) is linked at N274. The chain crosses the membrane as a helical span at residues 327–351; sequence PWIYFLTLILVGSFFILNLVLGALS. Topologically, residues 352–447 are cytoplasmic; it reads GEFTKEREES…RKCHVWVKSK (96 aa). Residues 374-391 are binding to the beta subunit; it reads QQMDEDLEGYMEWITHAE. The stretch at 433 to 679 is one II repeat; sequence NVVLRRKCHV…VFLAIAVDNL (247 aa). A helical transmembrane segment spans residues 448 to 466; the sequence is FFNWWVLLVVLLNTLVIAM. Residues 467 to 481 are Extracellular-facing; that stretch reads EHHNQTEGLTSFQDT. The N-linked (GlcNAc...) asparagine glycan is linked to N470. The helical transmembrane segment at 482–501 threads the bilayer; sequence ANVILLACFTIEMVMKMYAF. Residues 502 to 509 are Cytoplasmic-facing; that stretch reads GPRAYFMS. A helical membrane pass occupies residues 510–528; the sequence is IFNRFDCFVVTIGILEIIL. The Extracellular portion of the chain corresponds to 529–538; the sequence is VVSNIMTPLG. A helical transmembrane segment spans residues 539–557; it reads ISVMRCIRLLRLFKLTRYW. Over 558–576 the chain is Cytoplasmic; it reads TSLNNLVASLLNSVKSIAS. Residues 577–596 traverse the membrane as a helical segment; that stretch reads LLLLLFLFIVIFALLGMQVF. The Extracellular segment spans residues 597–651; that stretch reads GGKFNFPDRVIQRSNFDNFPQALISVFQVLTGEEWDSIMYNGIMAHGGPQSPGIL. Residues 652-675 form a helical membrane-spanning segment; it reads VSIYFIILYVCGNFVLLNVFLAIA. Residues 676–815 are Cytoplasmic-facing; the sequence is VDNLAEAESL…KLCHRIVNHT (140 aa). One copy of the III repeat lies at 802 to 1084; it reads HKFRKLCHRI…IFVGFVIVTF (283 aa). A helical membrane pass occupies residues 816–834; sequence TFTNIILLFILLSSISLAA. Topologically, residues 835 to 850 are extracellular; it reads EDPIDPRSFRNKVLAY. Residues 851-870 traverse the membrane as a helical segment; sequence ADIVFTTVFTIEIVLKMTVY. The Cytoplasmic segment spans residues 871–882; sequence GAFLHTGSFCRN. A helical transmembrane segment spans residues 883–901; sequence SFNILDLIVVGVSLLSMGM. Residues 902–908 are Extracellular-facing; it reads ESSTISV. The chain crosses the membrane as a helical span at residues 909–927; that stretch reads VKILRVLRVLRPLRAINRA. Residues 928–946 lie on the Cytoplasmic side of the membrane; that stretch reads KGLKHVVQCMFVAIKTIGN. Residues 947–966 form a helical membrane-spanning segment; it reads IVLVTMLLDFMFACIGVQLF. The Extracellular segment spans residues 967-1056; sequence KGKLYYCTDP…TGPLYNNRVG (90 aa). A dihydropyridine binding region spans residues 1004 to 1093; sequence RMWVNSDFNF…FQKQGEQEYK (90 aa). The helical transmembrane segment at 1057–1081 threads the bilayer; it reads ISIFFIIYIIIIAFFMMNIFVGFVI. The Cytoplasmic segment spans residues 1082-1134; the sequence is VTFQKQGEQEYKDCELDKNQRQCVQYALKARPLKCYIPKNPHQYRVWYFVTSC. Residues 1121–1405 form an IV repeat; sequence NPHQYRVWYF…LFVAIIMDNV (285 aa). Residues 1135-1153 form a helical membrane-spanning segment; that stretch reads YFEYLMFFLIMLNTLCLGI. The Extracellular portion of the chain corresponds to 1154–1168; that stretch reads QHCNQSDHITKLSDT. N1157 is a glycosylation site (N-linked (GlcNAc...) asparagine). The chain crosses the membrane as a helical span at residues 1169 to 1188; that stretch reads LNLIFTVLFTGEMIVKLIAF. Topologically, residues 1189–1196 are cytoplasmic; sequence KAKGYFGD. The helical transmembrane segment at 1197 to 1215 threads the bilayer; it reads PWNVFDFIIVVGSIVDVVL. Residues 1216-1252 are Extracellular-facing; the sequence is SEVDAALEARGGLWCLHGCAEVNPMQAIAEAENVRVS. Residues 1253 to 1271 traverse the membrane as a helical segment; that stretch reads ITFFRLFRVLRLIKLLNRS. The Cytoplasmic portion of the chain corresponds to 1272–1290; sequence EGIRNLLWTFIKSFQALPH. A helical transmembrane segment spans residues 1291-1310; it reads VGLLIVMLFFIYAVIGMQMF. Over 1311 to 1377 the chain is Extracellular; sequence GKVALVDGTE…GEEYTCGSSI (67 aa). A dihydropyridine binding region spans residues 1358 to 1424; that stretch reads LCDAKSDYGP…LGPHHLDEFK (67 aa). A phenylalkylamine binding region spans residues 1370 to 1413; the sequence is EYTCGSSIAVFYFLSFYILCAFLIINLFVAIIMDNVDYLTRDWS. A helical transmembrane segment spans residues 1378–1402; it reads AVFYFLSFYILCAFLIINLFVAIIM. Residues 1403–1852 lie on the Cytoplasmic side of the membrane; sequence DNVDYLTRDW…TKPKENTSAV (450 aa). The EF-hand domain maps to 1418–1453; it reads HHLDEFKKIWAEYDPEATGRIKHLDVVTLLRRIQPP. Residues D1431, E1433, T1435, R1437, and D1442 each contribute to the Ca(2+) site. Residues 1820–1852 are disordered; it reads NRQSGKVTKRKRRPIPVPPGTKSTKPKENTSAV.

This sequence belongs to the calcium channel alpha-1 subunit (TC 1.A.1.11) family. In terms of assembly, multisubunit complex consisting of alpha-1, alpha-2, beta and delta subunits in a 1:1:1:1 ratio. The channel activity is directed by the pore-forming and voltage-sensitive alpha-1 subunit. In many cases, this subunit is sufficient to generate voltage-sensitive calcium channel activity. The auxiliary subunits beta and alpha-2/delta linked by a disulfide bridge regulate the channel activity. An additional gamma subunit is present only in skeletal muscle L-type channel. May be non-phosphorylated. In terms of tissue distribution, skeletal muscle.

Its subcellular location is the membrane. Its function is as follows. Voltage-sensitive calcium channels (VSCC) mediate the entry of calcium ions into excitable cells and are also involved in a variety of calcium-dependent processes, including muscle contraction, gene expression, cell motility, cell division and cell death. The isoform alpha-1S gives rise to L-type calcium currents. Long-lasting (L-type) calcium channels belong to the 'high-voltage activated' (HVA) group. They are blocked by dihydropyridines (DHP), phenylalkylamines, and by benzothiazepines. Calcium channels containing the alpha-1S subunit play an important role in excitation-contraction coupling in skeletal muscle. This is Dihydropyridine-sensitive L-type skeletal muscle calcium channel subunit alpha-1 from Cyprinus carpio (Common carp).